The sequence spans 201 residues: Recombination protein RecR (201 aa).

Residues 57 to 74 (CRICGNITENSVNPCAIC) form a C4-type zinc finger. Residues 82–178 (STVFVVENSR…KVTRLAHGLA (97 aa)) form the Toprim domain.

This sequence belongs to the RecR family.

May play a role in DNA repair. It seems to be involved in an RecBC-independent recombinational process of DNA repair. It may act with RecF and RecO. This Leuconostoc citreum (strain KM20) protein is Recombination protein RecR.